The chain runs to 201 residues: UPF0301 protein Atu0781 (201 aa).

The protein belongs to the UPF0301 (AlgH) family.

The protein is UPF0301 protein Atu0781 of Agrobacterium fabrum (strain C58 / ATCC 33970) (Agrobacterium tumefaciens (strain C58)).